We begin with the raw amino-acid sequence, 427 residues long: Glutamate-1-semialdehyde 2,1-aminomutase (427 aa).

Residue Lys-267 is modified to N6-(pyridoxal phosphate)lysine.

Belongs to the class-III pyridoxal-phosphate-dependent aminotransferase family. HemL subfamily. As to quaternary structure, homodimer. Pyridoxal 5'-phosphate is required as a cofactor.

It localises to the cytoplasm. The catalysed reaction is (S)-4-amino-5-oxopentanoate = 5-aminolevulinate. Its pathway is porphyrin-containing compound metabolism; protoporphyrin-IX biosynthesis; 5-aminolevulinate from L-glutamyl-tRNA(Glu): step 2/2. In Geotalea uraniireducens (strain Rf4) (Geobacter uraniireducens), this protein is Glutamate-1-semialdehyde 2,1-aminomutase.